The primary structure comprises 195 residues: MARSGRYKVKFRRRREGKTDYMKRLALLKSRKPRVVVRRTNRYIIVQFIGFKGEGDEVIAYAFSKELEKYGWPYGGKNLPAAYLTGYLAAMRAKKAGVTEAILDIGRFPSTKGSRLYAALKGVLDAGIDVPHSPEILPDEDRIRGEHIASFAEKLEEEGSLERQFSDYLRRGADPKIISEAFESVLERISAMSNG.

This sequence belongs to the universal ribosomal protein uL18 family. Part of the 50S ribosomal subunit. Contacts the 5S and 23S rRNAs.

Its function is as follows. This is one of the proteins that bind and probably mediate the attachment of the 5S RNA into the large ribosomal subunit, where it forms part of the central protuberance. This Korarchaeum cryptofilum (strain OPF8) protein is Large ribosomal subunit protein uL18.